The following is a 299-amino-acid chain: B-box zinc finger protein 22 (299 aa).

Cys-5, Cys-8, Cys-28, His-33, Cys-57, Cys-60, Cys-80, and His-85 together coordinate Zn(2+). The B box-type 1; atypical zinc finger occupies 5 to 47; that stretch reads CNVCEAAEATVLCCADEAALCWACDEKIHAANKLAGKHQRVPL. A B box-type 2; atypical zinc finger spans residues 57–99; sequence CDICQEASGFFFCLQDRALLCRKCDVAIHTVNPHVSAHQRFLL. Disordered stretches follow at residues 143–181 and 206–299; these read FDHH…GSTT and ENNG…RRRF. Polar residues-rich tracts occupy residues 164–181, 251–260, and 277–290; these read VNDQ…GSTT, QIQSPPTASG, and ITSS…SPNQ.

In terms of assembly, interacts with HY5. Post-translationally, ubiquitinated by COP1 in vitro. COP1-mediated degradation of BBX22 by the proteasome occurs in the dark and is important for a precise skotomorphogenesis process and optimization of seedling growth under short days conditions.

The protein localises to the nucleus. Acts as a positive regulator of seedling photomorphogenesis and light-regulated inhibition of hypocotyl elongation, independently and in concert with HY5 and BBX21. Acts as a positive regulator of de-etiolation and influences chloroplast biogenesis and function through regulation of genes encoding chloroplast proteins. Acts downstream of COP1 and plays an important role in early and long-term adjustment of the shade avoidance syndrome (SAS) responses in natural environments. Regulates the expression of genes responsive to light hormone signals which may contribute to optimal seedling development. This is B-box zinc finger protein 22 from Arabidopsis thaliana (Mouse-ear cress).